Here is a 388-residue protein sequence, read N- to C-terminus: MNLHEYQGKQLFKEFGLPVSEGYACDTADEAVEAAKRIGGDIWVVKCQVHAGGRGKAGGVKLVKSLDDVRAFAEQWLGKNLVTFQTDEKGQPVAKILVESCTDIADELYLGAVVDRASRKIVFMASTEGGVEIETVAEETPEKILKAEIDPTVGAQPYQGRELGFKLGLTPDQVKQFTKVFMGLAKMFEQYDLALLEINPLVITDEGNVHCLDAKVGIDSNALYRQPKIREMHDPSQDDAREAEAAKWELNYVALDGNIGCMVNGAGLAMGTMDIVKLSGGEPANFLDVGGGATKERVSEAFKIILSDSSVKAVLVNIFGGIVRCDMIAEGIIGAVEEVGVKVPVIVRLEGNNAELGTQKLNESGLNIIAAESLSDAADKVVAAAGGQ.

An ATP-grasp domain is found at 9-244 (KQLFKEFGLP…PSQDDAREAE (236 aa)). ATP contacts are provided by residues lysine 46, 53–55 (GRG), glutamate 99, threonine 102, and glutamate 107. Mg(2+)-binding residues include asparagine 199 and aspartate 213. Residues asparagine 264 and 321–323 (GIV) each bind substrate.

Belongs to the succinate/malate CoA ligase beta subunit family. Heterotetramer of two alpha and two beta subunits. The cofactor is Mg(2+).

It catalyses the reaction succinate + ATP + CoA = succinyl-CoA + ADP + phosphate. The catalysed reaction is GTP + succinate + CoA = succinyl-CoA + GDP + phosphate. The protein operates within carbohydrate metabolism; tricarboxylic acid cycle; succinate from succinyl-CoA (ligase route): step 1/1. Functionally, succinyl-CoA synthetase functions in the citric acid cycle (TCA), coupling the hydrolysis of succinyl-CoA to the synthesis of either ATP or GTP and thus represents the only step of substrate-level phosphorylation in the TCA. The beta subunit provides nucleotide specificity of the enzyme and binds the substrate succinate, while the binding sites for coenzyme A and phosphate are found in the alpha subunit. The chain is Succinate--CoA ligase [ADP-forming] subunit beta from Idiomarina loihiensis (strain ATCC BAA-735 / DSM 15497 / L2-TR).